The primary structure comprises 1037 residues: Receptor kinase-like protein Xa21 (1037 aa).

A signal peptide spans 1 to 24; the sequence is MARSPTSVMISSLLLLLLIGPASS. The Extracellular segment spans residues 25 to 665; that stretch reads DDAAAAAAAR…LLENRKHFPV (641 aa). 3 N-linked (GlcNAc...) asparagine glycosylation sites follow: asparagine 66, asparagine 101, and asparagine 112. 11 LRR repeats span residues 89-112, 113-137, 138-161, 163-185, 187-210, 211-234, 236-259, 260-283, 285-308, 310-331, and 333-355; these read PHRVVKLLLRSSNLSGIISPSLGN, LSFLRELDLSDNYLSGEIPPELSRL, SRLQLLELSGNSIQGSIPAAIGAC, KLTSLDLSHNQLRGMIPREIGAS, KHLSNLYLHTNGLSGEIPSALGNL, TSLQYFDLSCNRLSGAIPSSLGQL, SSLLTMNLRQNNLSGMIPNSIWNL, SSLRAFSVSENKLGGMIPTNAFKT, HLLEVIDMGTNRFYGKIPASVANA, HLTQLQIDGNLFSGIITSGFGR, and RNLTTLYLWRNLFQTREQEDWGF. Asparagine 209 carries an N-linked (GlcNAc...) asparagine glycan. N-linked (GlcNAc...) asparagine glycans are attached at residues asparagine 247 and asparagine 258. The N-linked (GlcNAc...) asparagine glycan is linked to asparagine 307. Residues asparagine 334, asparagine 361, and asparagine 385 are each glycosylated (N-linked (GlcNAc...) asparagine). LRR repeat units lie at residues 362 to 385, 387 to 411, 412 to 435, 437 to 459, 460 to 482, 483 to 507, 509 to 532, 533 to 556, 557 to 580, 581 to 604, and 606 to 629; these read CSKLQTLDLGENNLGGVLPNSFSN, STSLSFLALDLNKITGSIPKDIGNL, IGLQHLYLCNNNFRGSLPSSLGRL, NLGILVAYENNLSGSIPLAIGNL, TELNILLLGTNKFSGWIPYTLSN, LTNLLSLGLSTNNLSGPIPSELFNI, TLSIMINVSKNNLEGSIPQEIGHL, KNLVEFHAESNRLSGKIPNTLGDC, QLLRYLYLQNNLLSGSIPSALGQL, KGLETLDLSSNNLSGQIPTSLADI, and MLHSLNLSFNSFMGEVPTIGAFAD. N-linked (GlcNAc...) asparagine glycans are attached at residues asparagine 447, asparagine 458, asparagine 482, asparagine 495, and asparagine 515. 2 N-linked (GlcNAc...) asparagine glycosylation sites follow: asparagine 592 and asparagine 611. Residues 666-686 form a helical membrane-spanning segment; the sequence is LPISVSLVAALAILSSLYLLI. At 687–1037 the chain is on the cytoplasmic side; that stretch reads TWHKRTKKGA…PVCEGASLEF (351 aa). Positions 689-694 match the Nuclear localization signal motif; that stretch reads HKRTKK. Serine 698 carries the post-translational modification Phosphoserine. Position 700 is a phosphothreonine (threonine 700). Residue serine 701 is modified to Phosphoserine. Phosphothreonine is present on threonine 717. One can recognise a Protein kinase domain in the interval 720-1019; that stretch reads FAPTNLLGSG…GDIIDELNAI (300 aa). ATP-binding positions include 726-734 and lysine 748; that span reads LGSGSFGSV. Aspartate 854 functions as the Proton acceptor in the catalytic mechanism.

This sequence belongs to the protein kinase superfamily. Ser/Thr protein kinase family. As to quaternary structure, interacts with WRKY62/XB10 in the nucleus. Interacts with SERK2. Requires Mn(2+) as cofactor. Mg(2+) serves as cofactor. Post-translationally, undergoes protein cleavage upon X.oryzae pv. oryzae protein Ax21 detection, thus releasing the processed protein kinase Xa21 chain. Autophosphorylated on serine and threonine residues; these phosphorylation prevents proteolytic degradation.

It localises to the cell membrane. The protein resides in the endoplasmic reticulum membrane. Its subcellular location is the nucleus. The enzyme catalyses L-seryl-[protein] + ATP = O-phospho-L-seryl-[protein] + ADP + H(+). It catalyses the reaction L-threonyl-[protein] + ATP = O-phospho-L-threonyl-[protein] + ADP + H(+). Functionally, receptor kinase that detects X.oryzae pv. oryzae protein Ax21 to promote innate immunity. Following X.oryzae pv. oryzae protein Ax21 detection, undergoes cleavage, releasing the processed protein kinase Xa21 chain. Its function is as follows. The processed protein kinase Xa21 chain released by protein cleavage after X.oryzae pv. oryzae protein Ax21 detection translocates into the nucleus where it can bind and regulate WRKY62, a transcription factor. Confers resistance to the bacterial pathogen X.oryzae pv. oryzae (Xoo). The chain is Receptor kinase-like protein Xa21 from Oryza sativa subsp. japonica (Rice).